We begin with the raw amino-acid sequence, 556 residues long: Adenine deaminase (556 aa).

Belongs to the metallo-dependent hydrolases superfamily. Adenine deaminase family. It depends on Mn(2+) as a cofactor.

It carries out the reaction adenine + H2O + H(+) = hypoxanthine + NH4(+). This Archaeoglobus fulgidus (strain ATCC 49558 / DSM 4304 / JCM 9628 / NBRC 100126 / VC-16) protein is Adenine deaminase.